Consider the following 280-residue polypeptide: Probable endonuclease 4 (280 aa).

Zn(2+)-binding residues include His-77, His-117, Glu-148, Asp-180, His-183, His-215, Asp-228, His-230, and Glu-259.

It belongs to the AP endonuclease 2 family. Requires Zn(2+) as cofactor.

The enzyme catalyses Endonucleolytic cleavage to 5'-phosphooligonucleotide end-products.. Functionally, endonuclease IV plays a role in DNA repair. It cleaves phosphodiester bonds at apurinic or apyrimidinic (AP) sites, generating a 3'-hydroxyl group and a 5'-terminal sugar phosphate. The sequence is that of Probable endonuclease 4 from Thermoplasma volcanium (strain ATCC 51530 / DSM 4299 / JCM 9571 / NBRC 15438 / GSS1).